A 229-amino-acid polypeptide reads, in one-letter code: 7-cyano-7-deazaguanine synthase (229 aa).

An ATP-binding site is contributed by 9 to 19 (LSGGLDSATVL). Residues Cys188, Cys198, Cys201, and Cys204 each contribute to the Zn(2+) site.

Belongs to the QueC family. The cofactor is Zn(2+).

It catalyses the reaction 7-carboxy-7-deazaguanine + NH4(+) + ATP = 7-cyano-7-deazaguanine + ADP + phosphate + H2O + H(+). It functions in the pathway purine metabolism; 7-cyano-7-deazaguanine biosynthesis. In terms of biological role, catalyzes the ATP-dependent conversion of 7-carboxy-7-deazaguanine (CDG) to 7-cyano-7-deazaguanine (preQ(0)). The sequence is that of 7-cyano-7-deazaguanine synthase from Methylobacillus flagellatus (strain ATCC 51484 / DSM 6875 / VKM B-1610 / KT).